A 369-amino-acid chain; its full sequence is MTVFTPLVLVCAGGTGGHLFPAQSLAYALKDRGIRVALATDARVDSIAGDFPAEEIVTIASATPSGRSVLRRAGAVVTLGRGFGQAARAVRRLNPAAVVGFGGYPTVPPMLAAQLLRVPTILHEQNAVMGRANGFLAKGARVIATGFKEVRGVPEKATARRVHTGNPIRPAVLAVAETPYPSLDADAPLRLLVFGGSQGARVMSEVVPAAIEKLPQDLRARLHLVQQARPEDLTATQNRYLAMGLGGIEAAPFFKDLPGRMASAHLVVARSGASTVSELAAIGRPAILVPLPGALDQDQAANAATLAQIGAALSIPQSAFTPDRLAAELVDLFEAPRKLTQAAAAAKTARILDAADRLAALVAETAAAT.

UDP-N-acetyl-alpha-D-glucosamine contacts are provided by residues 15–17 (TGG), N126, R169, S197, and Q299.

The protein belongs to the glycosyltransferase 28 family. MurG subfamily.

It is found in the cell inner membrane. The catalysed reaction is di-trans,octa-cis-undecaprenyl diphospho-N-acetyl-alpha-D-muramoyl-L-alanyl-D-glutamyl-meso-2,6-diaminopimeloyl-D-alanyl-D-alanine + UDP-N-acetyl-alpha-D-glucosamine = di-trans,octa-cis-undecaprenyl diphospho-[N-acetyl-alpha-D-glucosaminyl-(1-&gt;4)]-N-acetyl-alpha-D-muramoyl-L-alanyl-D-glutamyl-meso-2,6-diaminopimeloyl-D-alanyl-D-alanine + UDP + H(+). It functions in the pathway cell wall biogenesis; peptidoglycan biosynthesis. Cell wall formation. Catalyzes the transfer of a GlcNAc subunit on undecaprenyl-pyrophosphoryl-MurNAc-pentapeptide (lipid intermediate I) to form undecaprenyl-pyrophosphoryl-MurNAc-(pentapeptide)GlcNAc (lipid intermediate II). This Methylorubrum extorquens (strain CM4 / NCIMB 13688) (Methylobacterium extorquens) protein is UDP-N-acetylglucosamine--N-acetylmuramyl-(pentapeptide) pyrophosphoryl-undecaprenol N-acetylglucosamine transferase.